We begin with the raw amino-acid sequence, 264 residues long: 2-dehydro-3-deoxy-D-gluconate 5-dehydrogenase (264 aa).

Residue 14 to 38 coordinates NAD(+); it reads LVTGSTHGLGMAMAKGLGLAGATIV. Ser-147 provides a ligand contact to substrate. Residue Tyr-160 is the Proton acceptor of the active site.

It belongs to the short-chain dehydrogenases/reductases (SDR) family. As to quaternary structure, homotetramer.

It localises to the cytoplasm. It carries out the reaction 2-dehydro-3-deoxy-D-gluconate + NAD(+) = 3-deoxy-D-glycero-2,5-hexodiulosonate + NADH + H(+). In terms of biological role, 2-dehydro-3-deoxy-D-gluconate 5-dehydrogenase involved in ulvan degradation. Ulvan is the main polysaccharide component of the Ulvales (green seaweed) cell wall. It is composed of disaccharide building blocks comprising 3-sulfated rhamnose (Rha3S) linked to D-glucuronic acid (GlcA), L-iduronic acid (IduA), or D-xylose (Xyl). Catalyzes the reversible reduction of 2,5-diketo-3-deoxygluconate (DKII or 4,6-dihydroxy-2,5-dioxohexanoate) into 2-keto-3-deoxygluconate (KDG or 2-dehydro-3-deoxygluconate) with a concomitant oxidation of NADH. The sequence is that of 2-dehydro-3-deoxy-D-gluconate 5-dehydrogenase (kduD) from Formosa agariphila (strain DSM 15362 / KCTC 12365 / LMG 23005 / KMM 3901 / M-2Alg 35-1).